The primary structure comprises 126 residues: Protein ApaG (126 aa).

An ApaG domain is found at 2–126 (SDPRYQIDVS…FRLAVPGALH (125 aa)).

In Ectopseudomonas mendocina (strain ymp) (Pseudomonas mendocina), this protein is Protein ApaG.